A 245-amino-acid chain; its full sequence is 1-(5-phosphoribosyl)-5-[(5-phosphoribosylamino)methylideneamino] imidazole-4-carboxamide isomerase (245 aa).

D7 serves as the catalytic Proton acceptor. D129 functions as the Proton donor in the catalytic mechanism.

It belongs to the HisA/HisF family.

The protein resides in the cytoplasm. It catalyses the reaction 1-(5-phospho-beta-D-ribosyl)-5-[(5-phospho-beta-D-ribosylamino)methylideneamino]imidazole-4-carboxamide = 5-[(5-phospho-1-deoxy-D-ribulos-1-ylimino)methylamino]-1-(5-phospho-beta-D-ribosyl)imidazole-4-carboxamide. Its pathway is amino-acid biosynthesis; L-histidine biosynthesis; L-histidine from 5-phospho-alpha-D-ribose 1-diphosphate: step 4/9. The sequence is that of 1-(5-phosphoribosyl)-5-[(5-phosphoribosylamino)methylideneamino] imidazole-4-carboxamide isomerase from Shewanella sp. (strain ANA-3).